The sequence spans 552 residues: uncharacterized protein (552 aa).

4 helical membrane-spanning segments follow: residues 127–147, 160–180, 393–413, and 517–537; these read AIML…ISLL, LIIV…YINI, LTKQ…LSAV, and VIDS…FICI.

The protein localises to the membrane. This is an uncharacterized protein from Saccharomyces cerevisiae (strain ATCC 204508 / S288c) (Baker's yeast).